The sequence spans 145 residues: MLFFGFLLAFLSAVPGTEGEIIPRCELVKILREHGFEGFEGTTIADWICLVQHESDYNTEAYNNNGPSRDYGIFQINSKYWCNDGKTSGAVDGCHISCSELMTNDLEDDIKCAKKIARDAHGLTPWYGWKNHCEGRDLSSYVKGC.

An N-terminal signal peptide occupies residues 1–19 (MLFFGFLLAFLSAVPGTEG). The 126-residue stretch at 20 to 145 (EIIPRCELVK…RDLSSYVKGC (126 aa)) folds into the C-type lysozyme domain. Disulfide bonds link C25-C145, C49-C133, C82-C98, and C94-C112. Active-site residues include E54 and D70.

Belongs to the glycosyl hydrolase 22 family. Monomer.

It localises to the secreted. The enzyme catalyses Hydrolysis of (1-&gt;4)-beta-linkages between N-acetylmuramic acid and N-acetyl-D-glucosamine residues in a peptidoglycan and between N-acetyl-D-glucosamine residues in chitodextrins.. In terms of biological role, lysozymes have primarily a bacteriolytic function; those in tissues and body fluids are associated with the monocyte-macrophage system and enhance the activity of immunoagents. This Opisthocomus hoazin (Hoatzin) protein is Lysozyme C (LYZ).